Consider the following 1649-residue polypeptide: eIF-2-alpha kinase GCN2 (1649 aa).

Residues 1 to 26 are disordered; it reads MAGGRGAAGRGPAEPQESYSQRQDHE. The region spanning 25–137 is the RWD domain; sequence HELQALEAIY…HHVQSFLSEH (113 aa). A coiled-coil region spans residues 146 to 205; it reads HEEMLERQAQEKQQRLLEARQKEEQEQREILHEIQKRKEEIKEEKKRKEMAKQERLEITS. The interval 227-260 is disordered; it reads HGGSPDFVGNGKARAHSSGRSRRERQYSVCSGEA. Ser230 bears the Phosphoserine mark. Residues 239 to 249 are compositionally biased toward basic residues; it reads ARAHSSGRSRR. Protein kinase domains follow at residues 296-539 and 590-1001; these read VYNA…HSFI and FEEL…SELL. ATP-binding positions include 596-604 and Lys619; that span reads LGKGAFGAV. The interval 662–785 is disordered; sequence PAVPGTPPPD…CNEKDSRHEI (124 aa). Position 667 is a phosphothreonine (Thr667). Polar residues predominate over residues 705-721; it reads LSSSVEWSTSAERSNSA. 2 stretches are compositionally biased toward acidic residues: residues 731 to 740 and 754 to 764; these read SSDEEDEDER and SDSDIIFDNED. Residue Asp847 is the Proton acceptor of the active site. Thr870 carries the post-translational modification Phosphothreonine. Phosphothreonine; by autocatalysis is present on residues Thr899 and Thr904. The histidyl-tRNA synthetase-like stretch occupies residues 1022–1493; sequence TDGKAYRTMM…DHVMQKLRTK (472 aa). Lys1259 carries the N6-acetyllysine modification.

It belongs to the protein kinase superfamily. Ser/Thr protein kinase family. GCN2 subfamily. As to quaternary structure, homodimer; homodimerization is important for kinase activation by uncharged tRNAs. Interacts with GCN1; this interaction stimulates EIF2AK4/GCN2 kinase activity and is impaired by IMPACT upon a variety of stress conditions, such as amino acid depletion, UV-C irradiation, proteasome inhibitor treatment and glucose deprivation. Interacts with DNAJC3; this interaction inhibits EIF2AK4/GCN2 kinase activity during endoplasmic reticulum (ER), hypothermic and amino acid-starving stress conditions. Interacts with MAP3K20; activates EIF2AK4/GCN2 kinase activity in response to moderate ribotoxic stress. Autophosphorylated; autophosphorylation on Thr-899 is increased upon amino acid starvation and in UV irradiation cells and inhibited in presence of IMPACT.

Its subcellular location is the cytoplasm. It carries out the reaction L-seryl-[protein] + ATP = O-phospho-L-seryl-[protein] + ADP + H(+). The enzyme catalyses L-threonyl-[protein] + ATP = O-phospho-L-threonyl-[protein] + ADP + H(+). In terms of biological role, metabolic-stress sensing protein kinase that phosphorylates the alpha subunit of eukaryotic translation initiation factor 2 (EIF2S1/eIF-2-alpha) in response to low amino acid availability. Plays a role as an activator of the integrated stress response (ISR) required for adaptation to amino acid starvation. EIF2S1/eIF-2-alpha phosphorylation in response to stress converts EIF2S1/eIF-2-alpha into a global protein synthesis inhibitor, leading to a global attenuation of cap-dependent translation, and thus to a reduced overall utilization of amino acids, while concomitantly initiating the preferential translation of ISR-specific mRNAs, such as the transcriptional activator ATF4, and hence allowing ATF4-mediated reprogramming of amino acid biosynthetic gene expression to alleviate nutrient depletion. Required for the translational induction of protein kinase PRKCH following amino acid starvation. Binds uncharged tRNAs. Involved in cell cycle arrest by promoting cyclin D1 mRNA translation repression after the unfolded protein response pathway (UPR) activation or cell cycle inhibitor CDKN1A/p21 mRNA translation activation in response to amino acid deprivation. Plays a role in the consolidation of synaptic plasticity, learning as well as formation of long-term memory. Plays a role in neurite outgrowth inhibition. Plays a role in feeding behavior to maintain amino acid homeostasis; contributes to the innate aversion toward diets of imbalanced amino acid composition. Plays a proapoptotic role in response to glucose deprivation. Promotes global cellular protein synthesis repression in response to UV irradiation independently of the stress-activated protein kinase/c-Jun N-terminal kinase (SAPK/JNK) and p38 MAPK signaling pathways. Plays a role in the antiviral response against alphavirus infection; impairs early viral mRNA translation of the incoming genomic virus RNA, thus preventing alphavirus replication. The sequence is that of eIF-2-alpha kinase GCN2 from Rattus norvegicus (Rat).